The sequence spans 121 residues: Large ribosomal subunit protein uL22 (121 aa).

The protein belongs to the universal ribosomal protein uL22 family. Part of the 50S ribosomal subunit.

In terms of biological role, this protein binds specifically to 23S rRNA; its binding is stimulated by other ribosomal proteins, e.g. L4, L17, and L20. It is important during the early stages of 50S assembly. It makes multiple contacts with different domains of the 23S rRNA in the assembled 50S subunit and ribosome. Functionally, the globular domain of the protein is located near the polypeptide exit tunnel on the outside of the subunit, while an extended beta-hairpin is found that lines the wall of the exit tunnel in the center of the 70S ribosome. This Kocuria rhizophila (strain ATCC 9341 / DSM 348 / NBRC 103217 / DC2201) protein is Large ribosomal subunit protein uL22.